The following is a 264-amino-acid chain: ATP synthase subunit a (264 aa).

Transmembrane regions (helical) follow at residues 29–49, 89–109, 134–154, 177–197, 208–228, and 235–255; these read TWHI…LWLF, VIAP…FMDM, DLNI…YYSI, IPVN…SLAL, LIFI…TLGV, and LIFH…LTIV.

This sequence belongs to the ATPase A chain family. As to quaternary structure, F-type ATPases have 2 components, CF(1) - the catalytic core - and CF(0) - the membrane proton channel. CF(1) has five subunits: alpha(3), beta(3), gamma(1), delta(1), epsilon(1). CF(0) has three main subunits: a(1), b(2) and c(9-12). The alpha and beta chains form an alternating ring which encloses part of the gamma chain. CF(1) is attached to CF(0) by a central stalk formed by the gamma and epsilon chains, while a peripheral stalk is formed by the delta and b chains.

The protein resides in the cell inner membrane. In terms of biological role, key component of the proton channel; it plays a direct role in the translocation of protons across the membrane. This Shewanella woodyi (strain ATCC 51908 / MS32) protein is ATP synthase subunit a.